Consider the following 329-residue polypeptide: Glycerol-3-phosphate dehydrogenase [NAD(P)+] (329 aa).

Residues serine 10, tryptophan 11, arginine 31, and lysine 105 each coordinate NADPH. Sn-glycerol 3-phosphate contacts are provided by lysine 105, glycine 134, and serine 136. Residue alanine 138 coordinates NADPH. The sn-glycerol 3-phosphate site is built by lysine 189, aspartate 242, serine 252, arginine 253, and asparagine 254. Lysine 189 acts as the Proton acceptor in catalysis. Arginine 253 provides a ligand contact to NADPH. 2 residues coordinate NADPH: valine 277 and glutamate 279.

Belongs to the NAD-dependent glycerol-3-phosphate dehydrogenase family.

The protein localises to the cytoplasm. It carries out the reaction sn-glycerol 3-phosphate + NAD(+) = dihydroxyacetone phosphate + NADH + H(+). It catalyses the reaction sn-glycerol 3-phosphate + NADP(+) = dihydroxyacetone phosphate + NADPH + H(+). It participates in membrane lipid metabolism; glycerophospholipid metabolism. Functionally, catalyzes the reduction of the glycolytic intermediate dihydroxyacetone phosphate (DHAP) to sn-glycerol 3-phosphate (G3P), the key precursor for phospholipid synthesis. The chain is Glycerol-3-phosphate dehydrogenase [NAD(P)+] from Neisseria meningitidis serogroup A / serotype 4A (strain DSM 15465 / Z2491).